Reading from the N-terminus, the 461-residue chain is Glucan endo-1,3-beta-glucosidase (461 aa).

An N-terminal signal peptide occupies residues 1–23; it reads MPLLILLMLLAAGAAGAESATPS. The Proton donor role is filled by Glu123. Glu265 (nucleophile) is an active-site residue. Residues 350 to 375 are disordered; sequence GASVAPTPSPNPSPNPSPKPAPSGGG. A compositionally biased stretch (pro residues) spans 356–370; sequence TPSPNPSPNPSPKPA. A disulfide bridge links Cys378 with Cys439.

This sequence belongs to the glycosyl hydrolase 17 family. Post-translationally, contains two additional disulfide bonds.

The catalysed reaction is Hydrolysis of (1-&gt;3)-beta-D-glucosidic linkages in (1-&gt;3)-beta-D-glucans.. Its function is as follows. Is thought to be an important plant defense-related product against fungal pathogens. In Triticum aestivum (Wheat), this protein is Glucan endo-1,3-beta-glucosidase (GLC1).